We begin with the raw amino-acid sequence, 2667 residues long: MNEENPSSSIILDDQQQQDSFYSEIKELEKSIQSNKLSERKNTLTRINSIGKHELSTQENDATTTTTTTTVDLEEKLKVLIYLYFTSYSIGPDSQWIFSLVQSLKQLFKDISSATNTSLVTDELKINIVKFTLREIGRLAKLLPTNKRSKYVPQNTLMSFSLVLLNYFIDQIQSNSDLTTLLFAAQELLYRELTLQHMKNNQPIFNQILNKNKILTFYQNIVTKDSSNKSFFIVYFLLRNFTDQSNKQKEQDNTFKINDLLNIYNKTVIGSSQQKIEEHKFFKRLFNQLTNEDLQSIILPPLSRHIKRDQDQVFKILIFILENLSSDFNVIDLSSLLKSMLLPMLLPVIQSTISIEENRKLLKKTFTLIIERSKDTKLISSMITDDLLKTLSVAGNPSQKLIIISIISSIISTKNFIERLSLTTEKLQLSKQILQSISIYLEKELNKDNRNKGFKLLGKVMKMVEELPEQTIKIITNSLKNDDDIIKGQVILSLSKSLGPEANGTNKKVIQIINGFTETINTILKNVKNAKTCDPSTTTASLHYMLSLITTTGVPKNDIFTKYSTDKTTISNLYASTSFLHTDGFIQRTSKKDHAIDLLLTLFLRVKSFPSIKLNDKSPLYSSVLNCLLHSQWSVSKHSAIKIRSILSRNDSVDIDYPLLSNQLLIEFSTILFDDSLIITPQIINSNVESTTTTTTTISNKKNYLIAFRSILSKNIKSELYPMLSLICYHPFINYNWKRVSSLIQNDVNTTLSSNAIEISKYIFEKGLNQKKNKSYQQAFQQAINGLMNYNVPLLNEELVKLMVKALSYEPVLAITQQQWSIYHTLPTELFVEKQEQLVESRNDRKVKPKTAEEQRDEESRKRIEEKKKIQSGELEKQEKERQKQLAAQAVIRKDVQDVIDRLHLAMDTCQTMAKSSSNPQFVGEFMSPIIVALLQLMKHEITNHQFTQVFEKLICCVPSRFKLDRSFARHYIYIINNIYYRPTLSEIQILGFIQKILTHIRESIAKEALSGFAFNYFWPIIKNGLETTISFTIQEISMEIIQKHTAQGQAYPRGSMISSLIIVVSTNSRLEAQARNTIFQLIEGVETSDIGELMEGIISKHVQVRSICLQAIEKIPSIYSPSFVWEDKYIGSLWFARFDNHDANTSALAEKIWLATNQPTQLPEDFMKLLSDSTFNVNSETRKINALAIKEAATCHTHMIPEIVDNLFEIYEQNYPDEIRETPITSKFRISVATALSGLGNAIVEPEVLKSLFTKIIERGLFDPKEEVVQEFVSTGMSIINQQGVQFSGELLATFEAFLARPDNGTGEEDSIRANVVVYMGALAKHMDASNPKVSIVIDKLVDALSIPSESVQVGISKCIAQLIPSFKKQGDRLIPMLLEKLKNSSGNYADRRGAAFGLAGSVKGLGIGSLKNYSILDTLQSYIEDKKHPTSRQGALFAFECLCNTIGRVFEPYIIHILPKLLVCFGDNVSEVRDATADTAKAIMSQLSGHGVKIVLPALLKALDDRSWRTKEGSIELLGAMAFCAPKQLSSCLPTIVPKLTYVLNDTHTKVQEAAKEALSHIGSVIRNPEIQIHVPLLLQTYDDPEIHSKELLENLLSTNYVHTIDPASLSLLLPILERTLKERSSELKKMSCQIVGNLCSLTEPKDLVPYLNILMPVMKTVLLDPIPEVRAICARALGLLVRGMGEENFSTLIPWLLETVKSDQGAVERSGAAQGLSEVLASLDISRFNSLINELLAMTNSPRPHVREGILSIFIFTPISLGDLFLPYLPKVLPQVLKGLADDSDPVREVCMRCGQSIVLQFAVTGIEVIVPALEKVLFHENWRIRLSCVQLFGDLLFKLAGTTAQEVQSNNSSYNAKDDDDDEPGSSGNDIQKILGKERLGRILSSLYMMRFDNNSSVRQKVLLIWKYIVSNTPKTLREILPTLIEMIISSIGSNNVEKRQISAKTLGDIVSKLSDRILPEILPILERGLRSELEETRQGVCIGLSEVISSAKTQLLPYLSSVVTCITKALCDPLIDVREAAAKAFDHLYHTFGSKASNEILPQLIQLLDNSNNKDLAGYALDGLRQVILVRSSIVLPVLIPKLLSRPISTSNVTALSSLAADAGEGLYVHLSTIIPSLIESFTNPNTISNAKEIKEAAVSICKSIDEQGWDTLIGLLIEQTEIRLPNIRLGACELIGEFYNGNTMVTEYPEELLLSLLSLFNDPDALVQQAANNALGFITKSLKKDNLTYLPVFQKGIQLLVNETYEEVSTIPGFCLPKGLASVLPVLISGLMYGTSDQREQATNTLRTVINHTSADALKPFVMQITGPLILVIGDKFPWQVKSAILQTLSLLISKSPASMKIFLHQLQPTFIKCLSDSHKNVRTNAASALGLLMTLSSSVDQLVNSLITGISTADSISQESKLRALQSIFEKKPKVEQATLDKAIATIVDFLYQPSDDLRSMVAQTIGASSKCFTSLTELNQFIKTNLISPSQSVLSRYGKSLALGEIFKASGKNLIDSQSPNMPTIIKIIQTDCRDEKGPIRESSAYLAEAILVASPLTYAKDLVPSICHLIGDQSSSVSISALNVIKRFCKSNQQLSRQYLRDIVVPTMNRLKERTNLPLKLAAERTLVHSLQIFKESIVMDDLIKQLELSGDSSMANSLIDYHKRVLMKLSPDSDIEK.

8 HEAT repeats span residues Asp-19–Ser-56, Gln-95–Thr-132, Ser-159–Met-198, Asp-293–Val-330, Leu-336–Asp-375, Ser-398–Ile-439, Glu-466–Asn-503, and Leu-794–Val-832. The interval Arg-842 to Glu-879 is disordered. HEAT repeat units lie at residues Pro-929–Ser-967, Leu-985–Asn-1024, Gly-1085–Pro-1122, His-1199–Leu-1237, Gly-1290–Ala-1330, Pro-1333–Lys-1370, Gln-1371–Leu-1407, Leu-1412–Arg-1450, Pro-1454–Gly-1491, His-1492–Lys-1529, Ser-1533–Asn-1570, Glu-1572–Asp-1608, Ala-1610–Pro-1647, Pro-1652–Glu-1689, Asn-1691–Ile-1728, Ser-1729–Asp-1766, Pro-1770–Val-1807, and Gly-1809–Gly-1845. The tract at residues Ser-1853–Ile-1875 is disordered. HEAT repeat units follow at residues Glu-1882 to Lys-1919, Glu-1923 to Asp-1960, Ile-1962 to Thr-1998, Pro-2002 to Ser-2039, Lys-2040 to Ser-2078, Val-2080 to Glu-2110, Val-2114 to Glu-2152, Gly-2154 to Met-2190, Glu-2193 to Lys-2230, and Lys-2264 to Ala-2301. Residues Gly-2265 to Leu-2412 form an RWDBD region region. An HEAT 37; degenerate repeat occupies Gln-2326–Ile-2348. The stretch at Phe-2349–Ser-2385 is one HEAT 38; degenerate repeat. HEAT repeat units follow at residues Asp-2387–Lys-2421, Ala-2425–Ser-2462, Pro-2508–Leu-2545, and Thr-2546–Gln-2583.

This sequence belongs to the GCN1 family. In terms of assembly, interacts with eif2ak4/gcn2; this interaction stimulates the eif2ak4/gcn2 kinase activity and is impaired by impact upon a variety of stress conditions, such as amino acid depletion, UV-C irradiation, proteasome inhibitor treatment and glucose deprivation. Interacts with impact; this prevents the interaction of gcn1 with eif2ak4/gcn2 and inhibits eif2ak4/gcn2 kinase activity.

The protein resides in the cytoplasm. Ribosome collision sensor that activates a translation quality control pathway when a ribosome has stalled during translation. Directly binds to the ribosome and acts as a sentinel for colliding ribosomes. Gcn1 also acts as a positive activator of the integrated stress response (ISR) by mediating activation of eif2ak4/gcn2 in response to amino acid starvation. Interaction with eif2ak4/gcn2 on translating ribosomes stimulates eif2ak4/gcn2 kinase activity, leading to phosphorylation of eukaryotic translation initiation factor 2 (eIF-2-alpha/eif2s1). EIF2S1/eIF-2-alpha phosphorylation converts EIF2S1/eIF-2-alpha into a global protein synthesis inhibitor, leading to a global attenuation of cap-dependent translation, and thus to a reduced overall utilization of amino acids, while concomitantly initiating the preferential translation of ISR-specific mRNAs, such as the transcriptional activator atf4, and hence allowing atf4-mediated reprogramming of amino acid biosynthetic gene expression to alleviate nutrient depletion. The protein is eIF-2-alpha kinase activator GCN1 of Dictyostelium discoideum (Social amoeba).